The following is a 419-amino-acid chain: UDP-N-acetylglucosamine 1-carboxyvinyltransferase (419 aa).

22-23 (KN) contacts phosphoenolpyruvate. Arginine 95 provides a ligand contact to UDP-N-acetyl-alpha-D-glucosamine. The Proton donor role is filled by cysteine 119. Position 119 is a 2-(S-cysteinyl)pyruvic acid O-phosphothioketal (cysteine 119). UDP-N-acetyl-alpha-D-glucosamine is bound by residues 164 to 167 (KVSV), aspartate 308, and isoleucine 330.

It belongs to the EPSP synthase family. MurA subfamily.

It localises to the cytoplasm. It carries out the reaction phosphoenolpyruvate + UDP-N-acetyl-alpha-D-glucosamine = UDP-N-acetyl-3-O-(1-carboxyvinyl)-alpha-D-glucosamine + phosphate. It functions in the pathway cell wall biogenesis; peptidoglycan biosynthesis. Cell wall formation. Adds enolpyruvyl to UDP-N-acetylglucosamine. This Rickettsia peacockii (strain Rustic) protein is UDP-N-acetylglucosamine 1-carboxyvinyltransferase.